A 447-amino-acid chain; its full sequence is 2-oxoadipate dioxygenase/decarboxylase (447 aa).

2-oxoadipate contacts are provided by His-68, Arg-72, and His-224. Residue His-68 coordinates Fe(2+). Residues His-224 and Glu-290 each contribute to the Fe(2+) site. Val-391 serves as a coordination point for 2-oxoadipate.

The protein belongs to the 2-oxoadipate dioxygenase/decarboxylase family. Requires Fe(2+) as cofactor.

It catalyses the reaction 2-oxoadipate + O2 = (R)-2-hydroxyglutarate + CO2. Its function is as follows. Catalyzes the decarboxylation and hydroxylation of 2-oxoadipate (2OA) to form D-2-hydroxyglutarate (D-2-HGA). The protein is 2-oxoadipate dioxygenase/decarboxylase of Shigella flexneri.